A 390-amino-acid polypeptide reads, in one-letter code: UPF0229 protein OB2647 (390 aa).

The tract at residues 99–121 (NASQQGQQGQGNGKKAGDQPGTD) is disordered.

It belongs to the UPF0229 family.

In Oceanobacillus iheyensis (strain DSM 14371 / CIP 107618 / JCM 11309 / KCTC 3954 / HTE831), this protein is UPF0229 protein OB2647.